The chain runs to 499 residues: Maturase K (499 aa).

Belongs to the intron maturase 2 family. MatK subfamily.

The protein resides in the plastid. The protein localises to the chloroplast. Its function is as follows. Usually encoded in the trnK tRNA gene intron. Probably assists in splicing its own and other chloroplast group II introns. This chain is Maturase K, found in Batis maritima (Maritime saltwort).